The following is a 431-amino-acid chain: MRRLRRLAHLVLFCPFSKRLQGRLPGLRVRCIFLAWLGVFAGSWLVYVHYSSYSERCRGHVCQVVICDQYRKGIISGSVCQDLCELHMVEWRTCLSVAPGQQVYSGLWRDKDVTIKCGIEETLDSKARSDAAPRRELVLFDKPTRGTSIKEFREMTLSFLKANLGDLPSLPALVGQVLLMADFNKDNRVSLAEAKSVWALLQRNEFLLLLSLQEKEHASRLLGYCGDLYLTEGVPHGAWHAAALPPLLRPLLPPALQGALQQWLGPAWPWRAKIAIGLLEFVEELFHGSYGTFYMCETTLANVGYTATYDFKMADLQQVAPEATVRRFLQGRRCEHSTDCTYGRDCRAPCDRLMRQCKGDLIQPNLAKVCALLRGYLLPGAPADLREELGTQLRTCTTLSGLASQVEAHHSLVLSHLKTLLWKKISNTKYS.

Over 1-30 (MRRLRRLAHLVLFCPFSKRLQGRLPGLRVR) the chain is Cytoplasmic. Residues 5–6 (RR) carry the May mediate ER retention motif. Residues 31 to 51 (CIFLAWLGVFAGSWLVYVHYS) traverse the membrane as a helical segment. Residues 52-431 (SYSERCRGHV…WKKISNTKYS (380 aa)) are Lumenal-facing. 2 cysteine pairs are disulfide-bonded: cysteine 57-cysteine 94 and cysteine 62-cysteine 117.

Belongs to the DIPK family. Post-translationally, among the many cysteines in the lumenal domain, most are probably involved in disulfide bonds.

The protein localises to the endoplasmic reticulum membrane. This chain is Divergent protein kinase domain 1B, found in Homo sapiens (Human).